The primary structure comprises 126 residues: RutC family protein PH0854 (126 aa).

This sequence belongs to the RutC family.

This is RutC family protein PH0854 from Pyrococcus horikoshii (strain ATCC 700860 / DSM 12428 / JCM 9974 / NBRC 100139 / OT-3).